A 163-amino-acid chain; its full sequence is Choriogonadotropin subunit beta variant 2 (163 aa).

The N-terminal stretch at 1-18 is a signal peptide; it reads MSKGLLLLLLLSMGGTWA. Intrachain disulfides connect C27–C75, C41–C90, C44–C128, C52–C106, C56–C108, and C111–C118. Residues N31 and N48 are each glycosylated (N-linked (GlcNAc...) asparagine). The disordered stretch occupies residues 129–163; it reads DDPRFQASSSSKAPPPSLPSPSRLPGPSDTPILPQ. The segment covering 141 to 152 has biased composition (pro residues); the sequence is APPPSLPSPSRL.

It belongs to the glycoprotein hormones subunit beta family. In terms of tissue distribution, expressed in placenta, testis and pituitary.

Its subcellular location is the secreted. The chain is Choriogonadotropin subunit beta variant 2 (CGB2) from Homo sapiens (Human).